The primary structure comprises 610 residues: WD repeat-containing protein 46 (610 aa).

The tract at residues 1–103 (METAPKPGKD…TQDPFPGPAP (103 aa)) is disordered. Over residues 7-19 (PGKDVPPKKDKLQ) the composition is skewed to basic and acidic residues. Phosphoserine is present on Ser-41. Residues 65–77 (KKSRISKKPQVPK) show a composition bias toward basic residues. WD repeat units follow at residues 193-234 (LRQF…CEIN), 235-272 (VMEA…LHCI), 274-312 (RCDR…IVAA), 315-354 (ARAG…PLAK), 357-396 (CHRG…QPLS), and 399-436 (TLPH…SPPS). A disordered region spans residues 538–610 (ERLGYDPQAK…RPSALDRFVR (73 aa)). Over residues 572-582 (VMDEEHRDKVR) the composition is skewed to basic and acidic residues.

In terms of assembly, part of the small subunit (SSU) processome, composed of more than 70 proteins and the RNA chaperone small nucleolar RNA (snoRNA) U3. Interacts with DDX21, NCL, NOP2 and EBNA1BP2.

It is found in the nucleus. Its subcellular location is the nucleolus. In terms of biological role, scaffold component of the nucleolar structure. Required for localization of DDX21 and NCL to the granular compartment of the nucleolus. Part of the small subunit (SSU) processome, first precursor of the small eukaryotic ribosomal subunit. During the assembly of the SSU processome in the nucleolus, many ribosome biogenesis factors, an RNA chaperone and ribosomal proteins associate with the nascent pre-rRNA and work in concert to generate RNA folding, modifications, rearrangements and cleavage as well as targeted degradation of pre-ribosomal RNA by the RNA exosome. The chain is WD repeat-containing protein 46 (WDR46) from Homo sapiens (Human).